We begin with the raw amino-acid sequence, 247 residues long: uncharacterized protein (247 aa).

The protein resides in the mitochondrion. This is an uncharacterized protein from Schizosaccharomyces pombe (strain 972 / ATCC 24843) (Fission yeast).